We begin with the raw amino-acid sequence, 397 residues long: CCA-adding enzyme (397 aa).

G26 and R29 together coordinate ATP. Residues G26 and R29 each coordinate CTP. Mg(2+) contacts are provided by D39 and D41. R110, D153, R156, R159, and R162 together coordinate ATP. CTP is bound by residues R110, D153, R156, R159, and R162.

The protein belongs to the tRNA nucleotidyltransferase/poly(A) polymerase family. Bacterial CCA-adding enzyme type 3 subfamily. Homodimer. Mg(2+) is required as a cofactor.

The enzyme catalyses a tRNA precursor + 2 CTP + ATP = a tRNA with a 3' CCA end + 3 diphosphate. The catalysed reaction is a tRNA with a 3' CCA end + 2 CTP + ATP = a tRNA with a 3' CCACCA end + 3 diphosphate. Functionally, catalyzes the addition and repair of the essential 3'-terminal CCA sequence in tRNAs without using a nucleic acid template. Adds these three nucleotides in the order of C, C, and A to the tRNA nucleotide-73, using CTP and ATP as substrates and producing inorganic pyrophosphate. tRNA 3'-terminal CCA addition is required both for tRNA processing and repair. Also involved in tRNA surveillance by mediating tandem CCA addition to generate a CCACCA at the 3' terminus of unstable tRNAs. While stable tRNAs receive only 3'-terminal CCA, unstable tRNAs are marked with CCACCA and rapidly degraded. This Bacillus cytotoxicus (strain DSM 22905 / CIP 110041 / 391-98 / NVH 391-98) protein is CCA-adding enzyme.